The following is a 295-amino-acid chain: Protoheme IX farnesyltransferase (295 aa).

The next 9 membrane-spanning stretches (helical) occupy residues Val-8–Ala-28, Tyr-35–Phe-55, Val-84–Ala-104, Leu-107–Met-127, Val-132–Ala-152, Leu-162–Phe-182, Ile-208–Ala-228, Leu-233–Val-253, and Phe-264–Val-284.

This sequence belongs to the UbiA prenyltransferase family. Protoheme IX farnesyltransferase subfamily.

Its subcellular location is the cell inner membrane. It catalyses the reaction heme b + (2E,6E)-farnesyl diphosphate + H2O = Fe(II)-heme o + diphosphate. It functions in the pathway porphyrin-containing compound metabolism; heme O biosynthesis; heme O from protoheme: step 1/1. Converts heme B (protoheme IX) to heme O by substitution of the vinyl group on carbon 2 of heme B porphyrin ring with a hydroxyethyl farnesyl side group. The sequence is that of Protoheme IX farnesyltransferase from Enterobacter sp. (strain 638).